A 499-amino-acid chain; its full sequence is Calcium/calmodulin-dependent protein kinase type II subunit delta (499 aa).

Position 2 is an N-acetylalanine (Ala2). Residues Tyr14–Ile272 enclose the Protein kinase domain. ATP is bound by residues Leu20–Val28 and Lys43. Residue Asp136 is the Proton acceptor of the active site. The interval His283–Lys292 is autoinhibitory domain. Thr287 is modified (phosphothreonine; by autocatalysis). Positions Leu291–Lys301 are calmodulin-binding. Phosphothreonine; by autocatalysis occurs at positions 306 and 307. At Ser315 the chain carries Phosphoserine. Lys318 carries the post-translational modification N6-acetyllysine. Residues Ser319 and Ser330 each carry the phosphoserine modification. A Phosphothreonine modification is found at Thr331. At Ser333 the chain carries Phosphoserine. Residues Thr336 and Thr337 each carry the phosphothreonine modification. Phosphoserine occurs at positions 404, 490, and 494.

The protein belongs to the protein kinase superfamily. CAMK Ser/Thr protein kinase family. CaMK subfamily. CAMK2 is composed of 4 different chains: alpha (CAMK2A), beta (CAMK2B), gamma (CAMK2G), and delta (CAMK2D). The different isoforms assemble into homo- or heteromultimeric holoenzymes composed of 12 subunits with two hexameric rings stacked one on top of the other. Interacts with RRAD CACNB2. In terms of processing, autophosphorylation of Thr-287 following activation by Ca(2+)/calmodulin. Phosphorylation of Thr-287 locks the kinase into an activated state.

It is found in the cell membrane. It localises to the sarcolemma. The protein resides in the sarcoplasmic reticulum membrane. It catalyses the reaction L-seryl-[protein] + ATP = O-phospho-L-seryl-[protein] + ADP + H(+). The catalysed reaction is L-threonyl-[protein] + ATP = O-phospho-L-threonyl-[protein] + ADP + H(+). With respect to regulation, activated by Ca(2+)/calmodulin. Binding of calmodulin results in conformational change that relieves intrasteric autoinhibition and allows autophosphorylation of Thr-287 which turns the kinase in a constitutively active form and confers to the kinase a Ca(2+)-independent activity. In terms of biological role, calcium/calmodulin-dependent protein kinase involved in the regulation of Ca(2+) homeostatis and excitation-contraction coupling (ECC) in heart by targeting ion channels, transporters and accessory proteins involved in Ca(2+) influx into the myocyte, Ca(2+) release from the sarcoplasmic reticulum (SR), SR Ca(2+) uptake and Na(+) and K(+) channel transport. Targets also transcription factors and signaling molecules to regulate heart function. In its activated form, is involved in the pathogenesis of dilated cardiomyopathy and heart failure. Contributes to cardiac decompensation and heart failure by regulating SR Ca(2+) release via direct phosphorylation of RYR2 Ca(2+) channel on 'Ser-2808'. In the nucleus, phosphorylates the MEF2 repressor HDAC4, promoting its nuclear export and binding to 14-3-3 protein, and expression of MEF2 and genes involved in the hypertrophic program. Is essential for left ventricular remodeling responses to myocardial infarction. In pathological myocardial remodeling acts downstream of the beta adrenergic receptor signaling cascade to regulate key proteins involved in ECC. Regulates Ca(2+) influx to myocytes by binding and phosphorylating the L-type Ca(2+) channel subunit beta-2 CACNB2. In addition to Ca(2+) channels, can target and regulate the cardiac sarcolemmal Na(+) channel Nav1.5/SCN5A and the K+ channel Kv4.3/KCND3, which contribute to arrhythmogenesis in heart failure. Phosphorylates phospholamban (PLN/PLB), an endogenous inhibitor of SERCA2A/ATP2A2, contributing to the enhancement of SR Ca(2+) uptake that may be important in frequency-dependent acceleration of relaxation (FDAR) and maintenance of contractile function during acidosis. May participate in the modulation of skeletal muscle function in response to exercise, by regulating SR Ca(2+) transport through phosphorylation of PLN/PLB and triadin, a ryanodine receptor-coupling factor. In response to interferon-gamma (IFN-gamma) stimulation, catalyzes phosphorylation of STAT1, stimulating the JAK-STAT signaling pathway. This chain is Calcium/calmodulin-dependent protein kinase type II subunit delta (CAMK2D), found in Sus scrofa (Pig).